Consider the following 382-residue polypeptide: Ferredoxin--NADP reductase, root isozyme 2, chloroplastic (382 aa).

Residues 1–64 (MSHSAVSQAG…DGKRYPSTTI (64 aa)) constitute a chloroplast transit peptide. The region spanning 97–225 (KESYTAKIVS…TGPSGKVMLL (129 aa)) is the FAD-binding FR-type domain. Cysteines 200 and 205 form a disulfide. The residue at position 201 (Ser201) is a Phosphoserine. Position 233 is a phosphothreonine (Thr233). 235-253 (IMIATGTGVAPYRGYLRRM) provides a ligand contact to NADP(+).

It belongs to the ferredoxin--NADP reductase type 1 family. It depends on FAD as a cofactor. Expressed in shoots and roots. More abundant in roots than RFNR1.

Its subcellular location is the plastid. The protein localises to the chloroplast. It carries out the reaction 2 reduced [2Fe-2S]-[ferredoxin] + NADP(+) + H(+) = 2 oxidized [2Fe-2S]-[ferredoxin] + NADPH. Functionally, maintains the supply of reduced ferredoxin under non-photosynthetic conditions. This Arabidopsis thaliana (Mouse-ear cress) protein is Ferredoxin--NADP reductase, root isozyme 2, chloroplastic (RFNR2).